Consider the following 64-residue polypeptide: Sec-independent protein translocase protein TatA (64 aa).

A helical membrane pass occupies residues 10–30 (LVLILGIALIIFGPGKLPELG).

This sequence belongs to the TatA/E family. Forms a complex with TatC.

Its subcellular location is the cell membrane. Part of the twin-arginine translocation (Tat) system that transports large folded proteins containing a characteristic twin-arginine motif in their signal peptide across membranes. TatA could form the protein-conducting channel of the Tat system. This Alkaliphilus oremlandii (strain OhILAs) (Clostridium oremlandii (strain OhILAs)) protein is Sec-independent protein translocase protein TatA.